The sequence spans 498 residues: Aspartyl/glutamyl-tRNA(Asn/Gln) amidotransferase subunit B (498 aa).

Belongs to the GatB/GatE family. GatB subfamily. In terms of assembly, heterotrimer of A, B and C subunits.

The enzyme catalyses L-glutamyl-tRNA(Gln) + L-glutamine + ATP + H2O = L-glutaminyl-tRNA(Gln) + L-glutamate + ADP + phosphate + H(+). It catalyses the reaction L-aspartyl-tRNA(Asn) + L-glutamine + ATP + H2O = L-asparaginyl-tRNA(Asn) + L-glutamate + ADP + phosphate + 2 H(+). Its function is as follows. Allows the formation of correctly charged Asn-tRNA(Asn) or Gln-tRNA(Gln) through the transamidation of misacylated Asp-tRNA(Asn) or Glu-tRNA(Gln) in organisms which lack either or both of asparaginyl-tRNA or glutaminyl-tRNA synthetases. The reaction takes place in the presence of glutamine and ATP through an activated phospho-Asp-tRNA(Asn) or phospho-Glu-tRNA(Gln). The polypeptide is Aspartyl/glutamyl-tRNA(Asn/Gln) amidotransferase subunit B (Caulobacter vibrioides (strain ATCC 19089 / CIP 103742 / CB 15) (Caulobacter crescentus)).